A 194-amino-acid chain; its full sequence is MAENLAGNDRLIWIDLEMTGLDTDRDSIIEIATIVTDAQLNVLAEGPELAIAHPLETLEAMDEWNRNQHRRSGLWQRVIDSQVTHAQAEAQTVAFLSEWIRAGASPMCGNSICQDRRFLHRQMSRLERYFHYRNLDVSTIKELARRWAPTVANGFAKSSAHTALSDVRDSIDELRHYRQFMGALGGDTAAGVEN.

The Exonuclease domain occupies 11–174 (LIWIDLEMTG…SDVRDSIDEL (164 aa)). Y132 is a catalytic residue.

The protein belongs to the oligoribonuclease family.

The protein resides in the cytoplasm. In terms of biological role, 3'-to-5' exoribonuclease specific for small oligoribonucleotides. The polypeptide is Oligoribonuclease (Xanthomonas axonopodis pv. citri (strain 306)).